The primary structure comprises 328 residues: Malate dehydrogenase (328 aa).

11-17 (GAAGQIG) provides a ligand contact to NAD(+). Substrate contacts are provided by arginine 94 and arginine 100. NAD(+)-binding positions include asparagine 107, glutamine 114, and 131–133 (VGN). Residues asparagine 133 and arginine 164 each contribute to the substrate site. Residue histidine 189 is the Proton acceptor of the active site.

The protein belongs to the LDH/MDH superfamily. MDH type 2 family.

It catalyses the reaction (S)-malate + NAD(+) = oxaloacetate + NADH + H(+). Its function is as follows. Catalyzes the reversible oxidation of malate to oxaloacetate. The protein is Malate dehydrogenase of Xylella fastidiosa (strain 9a5c).